Here is a 627-residue protein sequence, read N- to C-terminus: Druantia protein DruC (627 aa).

It is found in the cytoplasm. Its function is as follows. Component of antiviral defense system Druantia type I, composed of DruA, DruB, DruC, DruD and DruE. Expression of Druantia in E.coli (strain MG1655) confers resistance to phage lambda, SECphi18, SECphi27 and T4. The protein is Druantia protein DruC of Escherichia coli (strain UMEA 4076-1).